The sequence spans 1482 residues: Calcium-dependent protein kinase 6 (1482 aa).

Disordered stretches follow at residues 250 to 320 (TNNY…IRPN) and 739 to 760 (SENF…DDSN). The span at 254–264 (AHDNNQDSNSY) shows a compositional bias: polar residues. The segment covering 277–301 (EEDNDTGDTYADNEEDEDNRDDNDD) has biased composition (acidic residues). Polar residues predominate over residues 302 to 318 (YSQYNQCEVESDTNQIR). The segment covering 739-748 (SENFSNNFND) has biased composition (low complexity). Over residues 749–760 (NKQKSLKNDDSN) the composition is skewed to basic and acidic residues. 2 EF-hand domains span residues 931–966 (IFER…LCYN) and 972–1007 (VDKK…LLKQ). Aspartate 985, serine 987, asparagine 989, cysteine 991, and aspartate 996 together coordinate Ca(2+). One can recognise a Protein kinase domain in the interval 1043 to 1295 (LSFKKILGCG…AAVLLHHPWF (253 aa)). Residues 1049–1057 (LGCGAFGEV) and lysine 1072 each bind ATP. Residue aspartate 1162 is the Proton acceptor of the active site. 4 consecutive EF-hand domains span residues 1338-1373 (NHVK…AGVK), 1376-1406 (DINR…RWKN), 1407-1442 (IDST…NGVN), and 1468-1482 (KISF…LSTF). Ca(2+) is bound by residues aspartate 1351, asparagine 1353, asparagine 1355, serine 1357, and glutamate 1362. Ca(2+) is bound by residues aspartate 1420, aspartate 1422, aspartate 1424, tyrosine 1426, and aspartate 1431.

This sequence belongs to the protein kinase superfamily. Ser/Thr protein kinase family. CDPK subfamily. It depends on Mg(2+) as a cofactor.

It carries out the reaction L-seryl-[protein] + ATP = O-phospho-L-seryl-[protein] + ADP + H(+). The enzyme catalyses L-threonyl-[protein] + ATP = O-phospho-L-threonyl-[protein] + ADP + H(+). Activated by calcium. Functionally, calcium-dependent protein kinase which acts as a sensor and effector of intracellular Ca(2+) levels. In sporozoites, probably involved in the secretion of the cysteine protease that cleaves circumsporozoite protein CSP, thereby exposing CSP TSR domain, which binds with high affinity to highly sulfated heparan sulfate proteoglycans (HSPGs), resulting in productive invasion of the host hepatocytes. The polypeptide is Calcium-dependent protein kinase 6 (Plasmodium berghei (strain Anka)).